A 169-amino-acid chain; its full sequence is Disulfide bond formation protein B (169 aa).

The Cytoplasmic segment spans residues 1 to 14 (MMRFLNHCSQGRSA). Residues 15-31 (WLLMILTALILESSALY) traverse the membrane as a helical segment. At 32–49 (FQHVMKLQPCVMCIYERV) the chain is on the periplasmic side. A disulfide bond links C41 and C44. Residues 50-65 (ALFGVLSAGILGVIAP) form a helical membrane-spanning segment. Residues 66–71 (KTPLRW) lie on the Cytoplasmic side of the membrane. A helical transmembrane segment spans residues 72 to 89 (LAIILWIYSAWGGLQLAW). Residues 90–144 (QHTMMQLHPSPFNTCDFFVNFPSWLALNQWLPSVFEATGDCSVRQWQFLTLEMPQ) lie on the Periplasmic side of the membrane. The cysteines at positions 104 and 130 are disulfide-linked. Residues 145–163 (WLVGIFAAYLVVAALVLIS) traverse the membrane as a helical segment. Residues 164–169 (QFFSRK) are Cytoplasmic-facing.

It belongs to the DsbB family.

The protein resides in the cell inner membrane. In terms of biological role, required for disulfide bond formation in some periplasmic proteins. Acts by oxidizing the DsbA protein. This chain is Disulfide bond formation protein B, found in Photorhabdus laumondii subsp. laumondii (strain DSM 15139 / CIP 105565 / TT01) (Photorhabdus luminescens subsp. laumondii).